A 154-amino-acid chain; its full sequence is Interleukin-2 (154 aa).

A signal peptide spans 1–20 (MYKMQLLCCIALTLALMANG). Thr-23 carries an O-linked (GalNAc...) threonine glycan. A disulfide bridge links Cys-78 with Cys-126.

The protein belongs to the IL-2 family.

It localises to the secreted. Cytokine produced by activated CD4-positive helper T-cells and to a lesser extend activated CD8-positive T-cells and natural killer (NK) cells that plays pivotal roles in the immune response and tolerance. Binds to a receptor complex composed of either the high-affinity trimeric IL-2R (IL2RA/CD25, IL2RB/CD122 and IL2RG/CD132) or the low-affinity dimeric IL-2R (IL2RB and IL2RG). Interaction with the receptor leads to oligomerization and conformation changes in the IL-2R subunits resulting in downstream signaling starting with phosphorylation of JAK1 and JAK3. In turn, JAK1 and JAK3 phosphorylate the receptor to form a docking site leading to the phosphorylation of several substrates including STAT5. This process leads to activation of several pathways including STAT, phosphoinositide-3-kinase/PI3K and mitogen-activated protein kinase/MAPK pathways. Functions as a T-cell growth factor and can increase NK-cell cytolytic activity as well. Promotes strong proliferation of activated B-cells and subsequently immunoglobulin production. Plays a pivotal role in regulating the adaptive immune system by controlling the survival and proliferation of regulatory T-cells, which are required for the maintenance of immune tolerance. Moreover, participates in the differentiation and homeostasis of effector T-cell subsets, including Th1, Th2, Th17 as well as memory CD8-positive T-cells. The sequence is that of Interleukin-2 (IL2) from Sus scrofa (Pig).